A 515-amino-acid chain; its full sequence is ATP-dependent rRNA helicase rrp-3 (515 aa).

Positions 1–85 (MSTKRRKTSD…LDVAPEQEEV (85 aa)) are disordered. Over residues 15–24 (LKKAAAPSAP) the composition is skewed to low complexity. The span at 25–55 (ELKKEKKVKDKSTKDKSSTKKTEKTEKKQDA) shows a compositional bias: basic and acidic residues. Residues 69 to 85 (TEEDSVTLDVAPEQEEV) are compositionally biased toward acidic residues. Positions 90–118 (KTFKDLGIVDALCEACERLGYKNPTPIQE) match the Q motif motif. The region spanning 121–292 (IPLALQNRDI…RASLRDPLKV (172 aa)) is the Helicase ATP-binding domain. Position 134–141 (134–141 (AETGSGKT)) interacts with ATP. Positions 240–243 (DEAD) match the DEAD box motif. The region spanning 316–464 (HKDTYLVYLC…EYPLEKDEVM (149 aa)) is the Helicase C-terminal domain. Positions 482–515 (KSLMENQGKHGGLLKRKRGNGQGGGRDHMDAEEG) are disordered. Basic and acidic residues predominate over residues 506–515 (GRDHMDAEEG).

It belongs to the DEAD box helicase family. DDX47/RRP3 subfamily.

It localises to the nucleus. Its function is as follows. Required for pre-ribosomal RNA processing. Involved in the maturation of the 35S-pre-rRNA and to its cleavage to mature 18S rRNA. The sequence is that of ATP-dependent rRNA helicase rrp-3 (rrp-3) from Neurospora crassa (strain ATCC 24698 / 74-OR23-1A / CBS 708.71 / DSM 1257 / FGSC 987).